The chain runs to 250 residues: Acetylglutamate kinase (250 aa).

Substrate is bound by residues 41–42, Arg63, and Asn156; that span reads GG.

Belongs to the acetylglutamate kinase family. ArgB subfamily.

Its subcellular location is the cytoplasm. It carries out the reaction N-acetyl-L-glutamate + ATP = N-acetyl-L-glutamyl 5-phosphate + ADP. Its pathway is amino-acid biosynthesis; L-arginine biosynthesis; N(2)-acetyl-L-ornithine from L-glutamate: step 2/4. Functionally, catalyzes the ATP-dependent phosphorylation of N-acetyl-L-glutamate. The polypeptide is Acetylglutamate kinase (Listeria monocytogenes serovar 1/2a (strain ATCC BAA-679 / EGD-e)).